The primary structure comprises 121 residues: Large ribosomal subunit protein uL18 (121 aa).

Belongs to the universal ribosomal protein uL18 family. Part of the 50S ribosomal subunit; part of the 5S rRNA/L5/L18/L25 subcomplex. Contacts the 5S and 23S rRNAs.

Functionally, this is one of the proteins that bind and probably mediate the attachment of the 5S RNA into the large ribosomal subunit, where it forms part of the central protuberance. The protein is Large ribosomal subunit protein uL18 of Burkholderia multivorans (strain ATCC 17616 / 249).